Here is a 476-residue protein sequence, read N- to C-terminus: Adenosylhomocysteinase (476 aa).

3 residues coordinate substrate: T67, D142, and E202. 203–205 (TTT) contacts NAD(+). 2 residues coordinate substrate: K232 and D236. Residues N237, 266–271 (GYGDVG), E289, N324, 345–347 (IGH), and N390 contribute to the NAD(+) site.

Belongs to the adenosylhomocysteinase family. NAD(+) serves as cofactor.

Its subcellular location is the cytoplasm. It carries out the reaction S-adenosyl-L-homocysteine + H2O = L-homocysteine + adenosine. The protein operates within amino-acid biosynthesis; L-homocysteine biosynthesis; L-homocysteine from S-adenosyl-L-homocysteine: step 1/1. In terms of biological role, may play a key role in the regulation of the intracellular concentration of adenosylhomocysteine. The chain is Adenosylhomocysteinase from Prochlorococcus marinus (strain MIT 9313).